Consider the following 282-residue polypeptide: HTH-type transcriptional activator RhaR (282 aa).

The HTH araC/xylS-type domain maps to 179–277 (DKLITRLAAS…GMTPSQWRHL (99 aa)). 2 consecutive DNA-binding regions (H-T-H motif) follow at residues 196 to 217 (DKFC…RQQT) and 244 to 267 (ISDI…TRET).

As to quaternary structure, binds DNA as a dimer.

It localises to the cytoplasm. Activates expression of the rhaSR operon in response to L-rhamnose. The protein is HTH-type transcriptional activator RhaR of Escherichia coli O1:K1 / APEC.